The chain runs to 306 residues: Homoserine O-acetyltransferase (306 aa).

C142 (acyl-thioester intermediate) is an active-site residue. Residues K163 and S192 each contribute to the substrate site. H235 (proton acceptor) is an active-site residue. Residue E237 is part of the active site. Substrate is bound at residue R249.

Belongs to the MetA family.

It is found in the cytoplasm. It carries out the reaction L-homoserine + acetyl-CoA = O-acetyl-L-homoserine + CoA. The protein operates within amino-acid biosynthesis; L-methionine biosynthesis via de novo pathway; O-acetyl-L-homoserine from L-homoserine: step 1/1. Functionally, transfers an acetyl group from acetyl-CoA to L-homoserine, forming acetyl-L-homoserine. The chain is Homoserine O-acetyltransferase from Brucella melitensis biotype 1 (strain ATCC 23456 / CCUG 17765 / NCTC 10094 / 16M).